The sequence spans 119 residues: Probable non-functional T cell receptor gamma variable 10 (119 aa).

Positions 1–19 are cleaved as a signal peptide; it reads MSLLEAFAFSSWALGLGLS. An Ig-like domain is found at 24–119; it reads FQLSISTEVK…MAVYYCAAWD (96 aa). A disulfide bond links Cys-40 and Cys-115.

As to quaternary structure, gamma-delta TR is a heterodimer composed of a gamma and delta chain; disulfide-linked. The gamma-delta TR is associated with the transmembrane signaling CD3 coreceptor proteins following the stoichiometry: a single gamma-delta TR heterodimer associates with one CD3D-CD3E heterodimer, one CD3G-CD3E heterodimer and one CD247 homodimer forming a stable octameric structure. Upon activation, gamma-delta TR complex associates with FCER1G to initiate intracellular signaling.

The protein localises to the cell membrane. Probable non-functional open reading frame (ORF) of V region of the variable domain of T cell receptor (TR) gamma chain. Non-functional ORF generally cannot participate in the synthesis of a productive T cell receptor (TR) chain due to altered V-(D)-J or switch recombination and/or splicing site (at mRNA level) and/or conserved amino acid change (protein level). Gamma-delta TRs recognize a variety of self and foreign non-peptide antigens frequently expressed at the epithelial boundaries between the host and external environment, including endogenous lipids presented by MH-like protein CD1D and phosphoantigens presented by butyrophilin-like molecule BTN3A1. Upon antigen recognition induces rapid, innate-like immune responses involved in pathogen clearance and tissue repair. Binding of gamma-delta TR complex to antigen triggers phosphorylation of immunoreceptor tyrosine-based activation motifs (ITAMs) in the CD3 chains by the LCK and FYN kinases, allowing the recruitment, phosphorylation, and activation of ZAP70 that facilitates phosphorylation of the scaffolding proteins LCP2 and LAT. This lead to the formation of a supramolecular signalosome that recruits the phospholipase PLCG1, resulting in calcium mobilization and ERK activation, ultimately leading to T cell expansion and differentiation into effector cells. Gamma-delta TRs are produced through somatic rearrangement of a limited repertoire of variable (V), diversity (D), and joining (J) genes. The potential diversity of gamma-delta TRs is conferred by the unique ability to rearrange (D) genes in tandem and to utilize all three reading frames. The combinatorial diversity is considerably increased by the sequence exonuclease trimming and random nucleotide (N) region additions which occur during the V-(D)-J rearrangements. The sequence is that of Probable non-functional T cell receptor gamma variable 10 from Homo sapiens (Human).